The primary structure comprises 257 residues: MDPLIIKLGGVLLDNPQAMERLFQALLAYRHHDRRPIVIVHGGGCLVDELMVRLQLPVVKRQGLRVTPADQIGIISGALAGTANKTLQACAIAHGLAAIGLSLADGGAVQVSPLDASLGHVGQALPGSPLLLRQLLAADFLPIVSSIGISADGMLLNVNADQAATALAATLGADLLMLSDVSGILDGKGQRIAEMTAQKAQRLIEQGIITDGMVVKVNAALEAARTLGRPVDIAGWRHAEKLPALFNGEAVGTRIHA.

Residues 43-44, R65, and N157 contribute to the substrate site; that span reads GG. Residues 180-185 and 208-210 contribute to the ATP site; these read DVSGIL and IIT.

This sequence belongs to the acetylglutamate kinase family. ArgB subfamily. In terms of assembly, homodimer.

It is found in the cytoplasm. The enzyme catalyses N-acetyl-L-glutamate + ATP = N-acetyl-L-glutamyl 5-phosphate + ADP. The protein operates within amino-acid biosynthesis; L-arginine biosynthesis; N(2)-acetyl-L-ornithine from L-glutamate: step 2/4. Its function is as follows. Catalyzes the ATP-dependent phosphorylation of N-acetyl-L-glutamate. The polypeptide is Acetylglutamate kinase (Edwardsiella ictaluri (strain 93-146)).